Consider the following 257-residue polypeptide: UPF0246 protein RHOS4_29700 (257 aa).

The protein belongs to the UPF0246 family.

The chain is UPF0246 protein RHOS4_29700 from Cereibacter sphaeroides (strain ATCC 17023 / DSM 158 / JCM 6121 / CCUG 31486 / LMG 2827 / NBRC 12203 / NCIMB 8253 / ATH 2.4.1.) (Rhodobacter sphaeroides).